We begin with the raw amino-acid sequence, 660 residues long: tRNA 5-methylaminomethyl-2-thiouridine biosynthesis bifunctional protein MnmC (660 aa).

A tRNA (mnm(5)s(2)U34)-methyltransferase region spans residues 1-242 (MTDRIVPATL…KRAMLVGEFA (242 aa)). An FAD-dependent cmnm(5)s(2)U34 oxidoreductase region spans residues 266–660 (IGAGLAGCAV…VRALRHGRVA (395 aa)).

In the N-terminal section; belongs to the methyltransferase superfamily. tRNA (mnm(5)s(2)U34)-methyltransferase family. This sequence in the C-terminal section; belongs to the DAO family. It depends on FAD as a cofactor.

It localises to the cytoplasm. The enzyme catalyses 5-aminomethyl-2-thiouridine(34) in tRNA + S-adenosyl-L-methionine = 5-methylaminomethyl-2-thiouridine(34) in tRNA + S-adenosyl-L-homocysteine + H(+). Functionally, catalyzes the last two steps in the biosynthesis of 5-methylaminomethyl-2-thiouridine (mnm(5)s(2)U) at the wobble position (U34) in tRNA. Catalyzes the FAD-dependent demodification of cmnm(5)s(2)U34 to nm(5)s(2)U34, followed by the transfer of a methyl group from S-adenosyl-L-methionine to nm(5)s(2)U34, to form mnm(5)s(2)U34. This Burkholderia pseudomallei (strain 1710b) protein is tRNA 5-methylaminomethyl-2-thiouridine biosynthesis bifunctional protein MnmC.